The primary structure comprises 273 residues: MKLPTFLIGFVALLVTSNGSARYVYREDPDDSADPPNPGALHANPILIDVDDVQPFPQPRAITDSQKSALVYKPRLYIKSGCHPYPAVQANGSLSDGLQWKNFLRSPCPGSPKGSQVYSRSDWYEGKWAIMYAWYLPRALDRVTWLVNGHRHYWLWVVVWTDSPDPKTSTLLATSMPGVANNIHKYYPPKSKYVIREKTLKVKSYQNHILFIKHGLELTDRAGDFQDLVTWEQMTDEARAALSTFHRPEHAANPPLQDKRFYEVLEKAYPFDR.

Positions 1-21 are cleaved as a signal peptide; sequence MKLPTFLIGFVALLVTSNGSA. N-linked (GlcNAc...) asparagine glycosylation occurs at Asn91. The Conserved undecapeptide motif motif lies at 129-139; it reads AIMYAWYLPRA. Residues 149-155 carry the Conserved heptapeptide motif motif; the sequence is GHRHYWL.

The protein belongs to the Necrosis inducing protein (NPP1) family.

The protein localises to the secreted. In terms of biological role, secreted effector that acts as a pathogen-associated molecular pattern (PAMP) recognized by the plant immune system. Seems not to induce necrosis in Nicotiana benthamiana leaves but significantly improves disease resistance of Arabidopsis thaliana to Hyaloperonospora arabidopsidis and causes an inhibition of plant growth which is typically associated with enhanced immunity when over-expressed in Arabidopsis. This Plasmopara viticola (Downy mildew of grapevine) protein is NLP effector protein 10.